Consider the following 559-residue polypeptide: Excitatory amino acid transporter 5 (559 aa).

Topologically, residues 1 to 16 (MVLDAVLARGRTVCKH) are cytoplasmic. Helical transmembrane passes span 17-37 (NGLL…GFFL), 60-80 (MLKM…LASL), and 94-114 (AYYL…VSII). Topologically, residues 115–215 (HPGGAAQKET…EIVYKSEPGT (101 aa)) are extracellular. Asparagine 190 is a glycosylation site (N-linked (GlcNAc...) asparagine). The helical transmembrane segment at 216–236 (SDGMNVLGIVIFSATMGIMLG) threads the bilayer. Residue asparagine 253 is glycosylated (N-linked (GlcNAc...) asparagine). A run of 6 helical transmembrane segments spans residues 259–279 (IVAV…AGKI), 298–318 (TVVC…YFLI), 329–349 (GVLQ…TLPI), 371–391 (VGAT…AIFI), 413–433 (AASI…VIVL), and 456–476 (FRTM…AHIC).

It belongs to the dicarboxylate/amino acid:cation symporter (DAACS) (TC 2.A.23) family. SLC1A7 subfamily. In terms of assembly, interacts with the PDZ domains of DLG4. Expressed in retina, located in both cone and rod photoreceptor terminals and in axon terminals of rod bipolar cells.

Its subcellular location is the photoreceptor inner segment membrane. The protein localises to the synaptic cell membrane. It catalyses the reaction K(+)(in) + L-glutamate(out) + 3 Na(+)(out) + H(+)(out) = K(+)(out) + L-glutamate(in) + 3 Na(+)(in) + H(+)(in). The enzyme catalyses K(+)(in) + L-aspartate(out) + 3 Na(+)(out) + H(+)(out) = K(+)(out) + L-aspartate(in) + 3 Na(+)(in) + H(+)(in). It carries out the reaction D-aspartate(out) + K(+)(in) + 3 Na(+)(out) + H(+)(out) = D-aspartate(in) + K(+)(out) + 3 Na(+)(in) + H(+)(in). Sodium-dependent, high-affinity amino acid transporter that mediates the uptake of L-glutamate and also L-aspartate and D-aspartate. Functions as a symporter that transports one amino acid molecule together with two or three Na(+) ions and one proton, in parallel with the counter-transport of one K(+) ion. Acts primarily as an inhibitory glutamate-gated chloride channel being a major inhibitory presynaptic receptor at mammalian rod bipolar cell axon terminals. Glutamate binding gates a large Cl(-) conductance that mediates inhibition, affecting visual processing in the retina. In Mus musculus (Mouse), this protein is Excitatory amino acid transporter 5.